The sequence spans 191 residues: Dephospho-CoA kinase (191 aa).

The 189-residue stretch at alanine 3 to valine 191 folds into the DPCK domain. An ATP-binding site is contributed by alanine 11–phenylalanine 16.

It belongs to the CoaE family.

It localises to the cytoplasm. It carries out the reaction 3'-dephospho-CoA + ATP = ADP + CoA + H(+). It functions in the pathway cofactor biosynthesis; coenzyme A biosynthesis; CoA from (R)-pantothenate: step 5/5. In terms of biological role, catalyzes the phosphorylation of the 3'-hydroxyl group of dephosphocoenzyme A to form coenzyme A. This Rickettsia conorii (strain ATCC VR-613 / Malish 7) protein is Dephospho-CoA kinase.